The chain runs to 562 residues: Arginine--tRNA ligase (562 aa).

The 'HIGH' region signature appears at 129-139 (ANPTGPLHVGH).

Belongs to the class-I aminoacyl-tRNA synthetase family. As to quaternary structure, monomer.

Its subcellular location is the cytoplasm. The catalysed reaction is tRNA(Arg) + L-arginine + ATP = L-arginyl-tRNA(Arg) + AMP + diphosphate. The sequence is that of Arginine--tRNA ligase from Xanthomonas oryzae pv. oryzae (strain KACC10331 / KXO85).